Consider the following 832-residue polypeptide: Disintegrin and metalloproteinase domain-containing protein 23 (832 aa).

A compositionally biased stretch (polar residues) spans 1-10 (MKPPGSSSRQ). A disordered region spans residues 1–37 (MKPPGSSSRQPPLAGCSLAGASCGPQRGPAGSVPASA). Positions 1–59 (MKPPGSSSRQPPLAGCSLAGASCGPQRGPAGSVPASAPARTPPCRLLLVLLLLPPLAAS) are cleaved as a signal peptide. The span at 28–37 (GPAGSVPASA) shows a compositional bias: low complexity. A propeptide spanning residues 60 to 286 (SRPRAWGAAA…ELQWLKRRKR (227 aa)) is cleaved from the precursor. N-linked (GlcNAc...) asparagine glycans are attached at residues asparagine 76, asparagine 96, asparagine 100, and asparagine 263. Residues 287-792 (AVNPSRGIFE…EGPKGPSATN (506 aa)) are Extracellular-facing. One can recognise a Peptidase M12B domain in the interval 299-496 (KYLELMIVND…GGGACLFNRP (198 aa)). Cystine bridges form between cysteine 408-cysteine 491, cysteine 450-cysteine 475, and cysteine 452-cysteine 459. The 87-residue stretch at 502–588 (PTECGNGYVE…QCPPNLHKQD (87 aa)) folds into the Disintegrin domain. N-linked (GlcNAc...) asparagine glycans are attached at residues asparagine 547 and asparagine 548. An intrachain disulfide couples cysteine 560 to cysteine 580. Residues 563–568 (AVNECD) form a may bind the integrin receptor region. N-linked (GlcNAc...) asparagine glycans are attached at residues asparagine 664 and asparagine 732. In terms of domain architecture, EGF-like spans 732–769 (NMSSCPLDSKGKVCSGHGVCSNEATCICDFTWAGTDCS). 3 disulfides stabilise this stretch: cysteine 736–cysteine 751, cysteine 745–cysteine 757, and cysteine 759–cysteine 768. Residues 793 to 813 (LIIGSIAGAILVAAIVLGGTG) form a helical membrane-spanning segment. Over 814–832 (WGFKNVKKRRFDPTQQGPI) the chain is Cytoplasmic.

As to quaternary structure, can bind to LGI1 and LGI4. Ligand for integrin alpha-V/beta-3. Highly expressed in the brain and weakly expressed in the heart. In the brain, expressed prominently in the amygdala, caudate nucleus, hypothalamus, thalamus, cerebral cortex and occipital pole.

It localises to the cell membrane. Its subcellular location is the secreted. Functionally, may play a role in cell-cell and cell-matrix interactions. This is a non-catalytic metalloprotease-like protein. The polypeptide is Disintegrin and metalloproteinase domain-containing protein 23 (ADAM23) (Homo sapiens (Human)).